The sequence spans 293 residues: Nucleotide-binding protein LBA0691 (293 aa).

Position 13-20 (13-20) interacts with ATP; the sequence is GMSGAGKT. 63 to 66 provides a ligand contact to GTP; sequence DLRV.

This sequence belongs to the RapZ-like family.

Its function is as follows. Displays ATPase and GTPase activities. The protein is Nucleotide-binding protein LBA0691 of Lactobacillus acidophilus (strain ATCC 700396 / NCK56 / N2 / NCFM).